The sequence spans 293 residues: PHD finger protein 11A (293 aa).

A C2HC pre-PHD-type zinc finger spans residues 25–61 (KRTCALCPEGHEWSQIYFSPSANIVAHENCLLYSSGL). Residues 91 to 143 (LKCSFCKNKGATMGYDLQSCTKNYHLSCAMEDHAILQVDEDHGTYKLFCQKHA) form a PHD-type; degenerate zinc finger. The interval 262–293 (SSSTSGSLLPPEDHQVRCQESPEVQAGSGDSL) is disordered.

The protein resides in the nucleus. The polypeptide is PHD finger protein 11A (Phf11a) (Mus musculus (Mouse)).